The following is a 372-amino-acid chain: Pluviatolide O-methyltransferase (372 aa).

S-adenosyl-L-homocysteine is bound by residues G214, D237, D257, M258, and K271. H275 acts as the Proton acceptor in catalysis. Catalysis depends on residues D306 and E338.

This sequence belongs to the class I-like SAM-binding methyltransferase superfamily. Cation-independent O-methyltransferase family. COMT subfamily. As to quaternary structure, homodimer. As to expression, mostly expressed in stems, and, to a lower extent, in leaves.

The enzyme catalyses (-)-pluviatolide + S-adenosyl-L-methionine = (-)-bursehernin + S-adenosyl-L-homocysteine + H(+). It functions in the pathway aromatic compound metabolism; phenylpropanoid biosynthesis. Functionally, O-methyltransferase involved in the biosynthesis of etoposide, a chemotherapeutic compound of the topoisomerase inhibitor family. Catalyzes the methylation of (-)-pluviatolide to produce (-)-bursehernin. This is Pluviatolide O-methyltransferase from Sinopodophyllum hexandrum (Himalayan may apple).